The following is a 139-amino-acid chain: Large-conductance mechanosensitive channel (139 aa).

Transmembrane regions (helical) follow at residues 9–29 and 79–99; these read AFAVKGNVVDMAVGIIIGAAF and IQTVIDFVIVAFAIFMGVKAI.

The protein belongs to the MscL family. In terms of assembly, homopentamer.

The protein localises to the cell inner membrane. Channel that opens in response to stretch forces in the membrane lipid bilayer. May participate in the regulation of osmotic pressure changes within the cell. The protein is Large-conductance mechanosensitive channel of Pseudomonas putida (strain ATCC 700007 / DSM 6899 / JCM 31910 / BCRC 17059 / LMG 24140 / F1).